Here is a 261-residue protein sequence, read N- to C-terminus: Carbonic anhydrase 1 (261 aa).

At Ala-2 the chain carries N-acetylalanine. The Alpha-carbonic anhydrase domain occupies 4 to 261 (SDWGYDSPNG…LKGRTVRAFF (258 aa)). Residue His-65 is the Proton donor/acceptor of the active site. His-95, His-97, and His-120 together coordinate Zn(2+). Substrate-binding positions include Thr-200 and 200 to 201 (TH).

Belongs to the alpha-carbonic anhydrase family. Zn(2+) serves as cofactor.

Its subcellular location is the cytoplasm. The enzyme catalyses hydrogencarbonate + H(+) = CO2 + H2O. It carries out the reaction urea = cyanamide + H2O. Its activity is regulated as follows. Inhibited by acetazolamide. Catalyzes the reversible hydration of carbon dioxide. Can hydrate cyanamide to urea. In Equus caballus (Horse), this protein is Carbonic anhydrase 1 (CA1).